A 448-amino-acid chain; its full sequence is Putative sodium-coupled neutral amino acid transporter 11 (448 aa).

The disordered stretch occupies residues 1 to 20 (MESERSCLLSSHDAGKGGSS). 11 helical membrane passes run 22–42 (VSSA…IGLP), 52–72 (MGLL…ILLV), 94–114 (IGYI…MISY), 143–163 (FVIA…RDIA), 165–185 (LGKV…TVVV), 200–220 (AWVF…FALI), 246–266 (ISVG…YATF), 286–306 (TFGR…ECFV), 324–344 (SSHV…SLSY), 346–366 (CLGI…MFIF), and 389–409 (MILV…ALFP). 3 N-linked (GlcNAc...) asparagine glycosylation sites follow: Asn-425, Asn-440, and Asn-444.

Belongs to the amino acid/polyamine transporter 2 family.

Its subcellular location is the membrane. Its function is as follows. Putative sodium-dependent amino acid/proton antiporter. The polypeptide is Putative sodium-coupled neutral amino acid transporter 11 (slc38a11) (Danio rerio (Zebrafish)).